The primary structure comprises 356 residues: Heat-inducible transcription repressor HrcA (356 aa).

It belongs to the HrcA family.

Functionally, negative regulator of class I heat shock genes (grpE-dnaK-dnaJ and groELS operons). Prevents heat-shock induction of these operons. The protein is Heat-inducible transcription repressor HrcA of Chlorobaculum tepidum (strain ATCC 49652 / DSM 12025 / NBRC 103806 / TLS) (Chlorobium tepidum).